We begin with the raw amino-acid sequence, 338 residues long: Holliday junction branch migration complex subunit RuvB (338 aa).

The large ATPase domain (RuvB-L) stretch occupies residues 4 to 187 (ADRLIHAEPQ…FGIPLRLEFY (184 aa)). Residues arginine 27, glycine 68, lysine 71, threonine 72, threonine 73, 134–136 (EDY), arginine 177, tyrosine 187, and arginine 224 contribute to the ATP site. Threonine 72 is a Mg(2+) binding site. The interval 188–258 (NVKDLSSIVT…VAELALDMLD (71 aa)) is small ATPAse domain (RuvB-S). Residues 261 to 338 (SEGFDYMDRK…RHFDIIQPEK (78 aa)) are head domain (RuvB-H). Positions 297, 316, and 321 each coordinate DNA.

Belongs to the RuvB family. As to quaternary structure, homohexamer. Forms an RuvA(8)-RuvB(12)-Holliday junction (HJ) complex. HJ DNA is sandwiched between 2 RuvA tetramers; dsDNA enters through RuvA and exits via RuvB. An RuvB hexamer assembles on each DNA strand where it exits the tetramer. Each RuvB hexamer is contacted by two RuvA subunits (via domain III) on 2 adjacent RuvB subunits; this complex drives branch migration. In the full resolvosome a probable DNA-RuvA(4)-RuvB(12)-RuvC(2) complex forms which resolves the HJ.

Its subcellular location is the cytoplasm. The enzyme catalyses ATP + H2O = ADP + phosphate + H(+). The RuvA-RuvB-RuvC complex processes Holliday junction (HJ) DNA during genetic recombination and DNA repair, while the RuvA-RuvB complex plays an important role in the rescue of blocked DNA replication forks via replication fork reversal (RFR). RuvA specifically binds to HJ cruciform DNA, conferring on it an open structure. The RuvB hexamer acts as an ATP-dependent pump, pulling dsDNA into and through the RuvAB complex. RuvB forms 2 homohexamers on either side of HJ DNA bound by 1 or 2 RuvA tetramers; 4 subunits per hexamer contact DNA at a time. Coordinated motions by a converter formed by DNA-disengaged RuvB subunits stimulates ATP hydrolysis and nucleotide exchange. Immobilization of the converter enables RuvB to convert the ATP-contained energy into a lever motion, pulling 2 nucleotides of DNA out of the RuvA tetramer per ATP hydrolyzed, thus driving DNA branch migration. The RuvB motors rotate together with the DNA substrate, which together with the progressing nucleotide cycle form the mechanistic basis for DNA recombination by continuous HJ branch migration. Branch migration allows RuvC to scan DNA until it finds its consensus sequence, where it cleaves and resolves cruciform DNA. This chain is Holliday junction branch migration complex subunit RuvB, found in Shewanella woodyi (strain ATCC 51908 / MS32).